The sequence spans 151 residues: Probable cGMP 3',5'-cyclic phosphodiesterase subunit delta (151 aa).

Belongs to the PDE6D/unc-119 family. Interacts with Pde6.

The protein localises to the nucleus. Its subcellular location is the cytoplasm. This Drosophila virilis (Fruit fly) protein is Probable cGMP 3',5'-cyclic phosphodiesterase subunit delta.